Reading from the N-terminus, the 593-residue chain is Monoterpene synthase 7, chloroplastic (593 aa).

Residues 1–39 (MSVSLSFAASATFGFRGGLGGFSRPAAAIKQWRCLPRIQ) constitute a chloroplast transit peptide. Residues Asp-348, Asp-352, Asp-491, and Glu-499 each coordinate Mg(2+). Positions 348–352 (DDVYD) match the DDXXD motif motif.

This sequence belongs to the terpene synthase family. Tpsa subfamily. Requires Mg(2+) as cofactor. It depends on Mn(2+) as a cofactor. Highly expressed in flowers, petals and sepals, but almost undetectable in vegetative organs.

It localises to the plastid. The protein localises to the chloroplast. The enzyme catalyses (2E)-geranyl diphosphate = sabinene + diphosphate. It carries out the reaction (2E)-geranyl diphosphate = terpinolene + diphosphate. The catalysed reaction is (2E)-geranyl diphosphate = alpha-pinene + diphosphate. It catalyses the reaction (2E)-geranyl diphosphate = beta-pinene + diphosphate. The enzyme catalyses (2E)-geranyl diphosphate = beta-myrcene + diphosphate. It carries out the reaction (2E)-geranyl diphosphate = alpha-terpinene + diphosphate. The catalysed reaction is (2E)-geranyl diphosphate = beta-phellandrene + diphosphate. It catalyses the reaction (2E)-geranyl diphosphate = gamma-terpinene + diphosphate. It functions in the pathway secondary metabolite biosynthesis; terpenoid biosynthesis. Its function is as follows. Monoterpene synthase involved in the biosynthesis of volatile compounds present in floral scent. Mediates the conversion of (2E)-geranyl diphosphate (GPP) into sabinene and sub-products such as alpha-thujene, alpha-pinene, beta-pinene, myrcene, alpha-phellandrene, alpha-terpinene, beta-phellandrene, gamma-terpinene and terpinolene. Unable to use farnesyl diphosphate (FPP) as substrate. This is Monoterpene synthase 7, chloroplastic from Hedychium coronarium (White butterfly ginger-lily).